Consider the following 320-residue polypeptide: SUN domain-containing protein 3 (320 aa).

At 1-6 (MLTRSW) the chain is on the nuclear side. The helical transmembrane segment at 7 to 29 (KIILSTVFISTFLLVGLLNHQWL) threads the bilayer. Over 30 to 320 (KETEFPQKPR…RVHGIPSDYT (291 aa)) the chain is Perinuclear space. A coiled-coil region spans residues 63–102 (KEQQELLKKESQTLENNFREILFLIEQIDVLKALLKDMKD). An SUN domain is found at 156–317 (GASVIEAGTS…YRFRVHGIPS (162 aa)).

In terms of assembly, self-associates. Interacts with SYNE1 and SPAG4/SUN4. Proposed to form a spermatogenesis-specific LINC complex with SYNE1 during sperm head formation possibly implicating a SUN domain-based heterotrimer with SPAG4/SUN4 associating with SYNE1. Can interact with SYNE3; the interaction is questioned by missing colocalization in spermatids. Specifically expressed in testis (at protein level).

Its subcellular location is the membrane. The protein localises to the nucleus envelope. It localises to the nucleus inner membrane. Its function is as follows. As a probable component of the LINC (LInker of Nucleoskeleton and Cytoskeleton) complex, involved in the connection between the nuclear lamina and the cytoskeleton. The nucleocytoplasmic interactions established by the LINC complex play an important role in the transmission of mechanical forces across the nuclear envelope and in nuclear movement and positioning. May be involved in nuclear remodeling during sperm head formation in spermatogenesis. A probable SUN3:SYNE1 LINC complex may tether spermatid nuclei to posterior cytoskeletal structures such as the manchette. The sequence is that of SUN domain-containing protein 3 (Sun3) from Mus musculus (Mouse).